We begin with the raw amino-acid sequence, 828 residues long: RNA-directed RNA polymerase 2a (828 aa).

In terms of domain architecture, RdRp catalytic spans 515–628 (KFCLEIDLSK…FSIKAPVGDP (114 aa)). The tract at residues 776–828 (SKASRRKAVESNGKHRDPSTRDHSKVGTDESKETSTEETTQTEPQGAGSQKSK) is disordered. Positions 782–810 (KAVESNGKHRDPSTRDHSKVGTDESKETS) are enriched in basic and acidic residues.

This sequence belongs to the ssRNA positive-strand viruses RNA-directed RNA polymerase family. Interacts with replication protein 1a.

The enzyme catalyses RNA(n) + a ribonucleoside 5'-triphosphate = RNA(n+1) + diphosphate. RNA-dependent RNA polymerase which replicates the viral genome composed of 3 RNA segments, RNA1, RNA2 and RNA3. This Canna (Florist's daisy) protein is RNA-directed RNA polymerase 2a.